Consider the following 272-residue polypeptide: Putative pyruvate, phosphate dikinase regulatory protein (272 aa).

149–156 (GVSRTSKT) provides a ligand contact to ADP.

The protein belongs to the pyruvate, phosphate/water dikinase regulatory protein family. PDRP subfamily.

It carries out the reaction N(tele)-phospho-L-histidyl/L-threonyl-[pyruvate, phosphate dikinase] + ADP = N(tele)-phospho-L-histidyl/O-phospho-L-threonyl-[pyruvate, phosphate dikinase] + AMP + H(+). It catalyses the reaction N(tele)-phospho-L-histidyl/O-phospho-L-threonyl-[pyruvate, phosphate dikinase] + phosphate + H(+) = N(tele)-phospho-L-histidyl/L-threonyl-[pyruvate, phosphate dikinase] + diphosphate. Its function is as follows. Bifunctional serine/threonine kinase and phosphorylase involved in the regulation of the pyruvate, phosphate dikinase (PPDK) by catalyzing its phosphorylation/dephosphorylation. This is Putative pyruvate, phosphate dikinase regulatory protein from Lactiplantibacillus plantarum (strain ATCC BAA-793 / NCIMB 8826 / WCFS1) (Lactobacillus plantarum).